The following is a 272-amino-acid chain: Putative hydro-lyase BRADO2538 (272 aa).

Belongs to the D-glutamate cyclase family.

The polypeptide is Putative hydro-lyase BRADO2538 (Bradyrhizobium sp. (strain ORS 278)).